The sequence spans 293 residues: 4-hydroxy-tetrahydrodipicolinate synthase (293 aa).

A pyruvate-binding site is contributed by Thr-47. Tyr-136 functions as the Proton donor/acceptor in the catalytic mechanism. Catalysis depends on Lys-164, which acts as the Schiff-base intermediate with substrate. Ile-206 contacts pyruvate.

Belongs to the DapA family. Homotetramer; dimer of dimers.

The protein resides in the cytoplasm. It carries out the reaction L-aspartate 4-semialdehyde + pyruvate = (2S,4S)-4-hydroxy-2,3,4,5-tetrahydrodipicolinate + H2O + H(+). The protein operates within amino-acid biosynthesis; L-lysine biosynthesis via DAP pathway; (S)-tetrahydrodipicolinate from L-aspartate: step 3/4. Catalyzes the condensation of (S)-aspartate-beta-semialdehyde [(S)-ASA] and pyruvate to 4-hydroxy-tetrahydrodipicolinate (HTPA). This Listeria welshimeri serovar 6b (strain ATCC 35897 / DSM 20650 / CCUG 15529 / CIP 8149 / NCTC 11857 / SLCC 5334 / V8) protein is 4-hydroxy-tetrahydrodipicolinate synthase.